Consider the following 1104-residue polypeptide: Protein transport protein SEC31 homolog B (1104 aa).

WD repeat units follow at residues 5-45, 62-109, 120-160, 170-210, 214-257, 261-301, and 304-344; these read KGVG…EIFK, PSSE…GSQP, VHKG…EPSH, ATQG…PIIN, SVRR…SPVR, GHQR…IVAE, and AGNN…RYGV. A Phosphothreonine modification is found at Thr-526. The disordered stretch occupies residues 527 to 562; the sequence is PVSTSAKDFMPSDTDFSTKGEETQEMQEEEEESSDP. Over residues 549–560 the composition is skewed to acidic residues; that stretch reads TQEMQEEEEESS. The stretch at 662-707 is one WD 8 repeat; it reads TLCDALASKLMAAGNTLAAVLCYICAGNVDRTVEIWSRSLANERDG. 4 disordered regions span residues 782–811, 851–874, 892–931, and 952–994; these read LSAE…PTQA, HQAQ…PSMR, QQPT…QYPN, and TPGV…SNVP. 3 stretches are compositionally biased toward polar residues: residues 786–811, 863–874, and 892–908; these read PETN…PTQA, PAPTSNAQPSMR, and QQPT…SNNA. Over residues 959–977 the composition is skewed to low complexity; the sequence is SVQPASPPTQQAAAQAAPA.

It belongs to the WD repeat SEC31 family. Interacts with SEC13A and SEC13B.

It is found in the golgi apparatus. Its subcellular location is the endoplasmic reticulum. In terms of biological role, required for protein transport from the endoplasmic reticulum to the Golgi apparatus. This Arabidopsis thaliana (Mouse-ear cress) protein is Protein transport protein SEC31 homolog B.